The chain runs to 306 residues: Dihydroorotate dehydrogenase B (NAD(+)), catalytic subunit (306 aa).

FMN is bound by residues S23 and 47-48 (KS). Residues K47, 71–75 (NAMGL), and N130 contribute to the substrate site. Residue N130 coordinates FMN. C133 acts as the Nucleophile in catalysis. FMN is bound by residues K168 and I194. 195–196 (NT) serves as a coordination point for substrate. Residues G220, 246-247 (GG), and 268-269 (GS) each bind FMN.

This sequence belongs to the dihydroorotate dehydrogenase family. Type 1 subfamily. Heterotetramer of 2 PyrK and 2 PyrD type B subunits. FMN is required as a cofactor.

It is found in the cytoplasm. The catalysed reaction is (S)-dihydroorotate + NAD(+) = orotate + NADH + H(+). It functions in the pathway pyrimidine metabolism; UMP biosynthesis via de novo pathway; orotate from (S)-dihydroorotate (NAD(+) route): step 1/1. Its function is as follows. Catalyzes the conversion of dihydroorotate to orotate with NAD(+) as electron acceptor. In Methanocaldococcus jannaschii (strain ATCC 43067 / DSM 2661 / JAL-1 / JCM 10045 / NBRC 100440) (Methanococcus jannaschii), this protein is Dihydroorotate dehydrogenase B (NAD(+)), catalytic subunit (pyrD).